Consider the following 428-residue polypeptide: UDP-N-acetylglucosamine 1-carboxyvinyltransferase 2 (428 aa).

Residue 22-23 participates in phosphoenolpyruvate binding; that stretch reads KN. R92 serves as a coordination point for UDP-N-acetyl-alpha-D-glucosamine. The Proton donor role is filled by C116. C116 bears the 2-(S-cysteinyl)pyruvic acid O-phosphothioketal mark. UDP-N-acetyl-alpha-D-glucosamine is bound by residues 121 to 125, D304, and I326; that span reads RPIDQ.

This sequence belongs to the EPSP synthase family. MurA subfamily.

Its subcellular location is the cytoplasm. The catalysed reaction is phosphoenolpyruvate + UDP-N-acetyl-alpha-D-glucosamine = UDP-N-acetyl-3-O-(1-carboxyvinyl)-alpha-D-glucosamine + phosphate. It participates in cell wall biogenesis; peptidoglycan biosynthesis. Functionally, cell wall formation. Adds enolpyruvyl to UDP-N-acetylglucosamine. This is UDP-N-acetylglucosamine 1-carboxyvinyltransferase 2 from Oceanobacillus iheyensis (strain DSM 14371 / CIP 107618 / JCM 11309 / KCTC 3954 / HTE831).